Consider the following 183-residue polypeptide: Ribosome-recycling factor (183 aa).

The protein belongs to the RRF family.

It is found in the cytoplasm. Responsible for the release of ribosomes from messenger RNA at the termination of protein biosynthesis. May increase the efficiency of translation by recycling ribosomes from one round of translation to another. In Ureaplasma parvum serovar 3 (strain ATCC 27815 / 27 / NCTC 11736), this protein is Ribosome-recycling factor.